The sequence spans 406 residues: Phosphopentomutase (406 aa).

6 residues coordinate Mn(2+): D10, D305, H310, D346, H347, and H358.

Belongs to the phosphopentomutase family. Mn(2+) serves as cofactor.

It is found in the cytoplasm. It carries out the reaction 2-deoxy-alpha-D-ribose 1-phosphate = 2-deoxy-D-ribose 5-phosphate. The enzyme catalyses alpha-D-ribose 1-phosphate = D-ribose 5-phosphate. It functions in the pathway carbohydrate degradation; 2-deoxy-D-ribose 1-phosphate degradation; D-glyceraldehyde 3-phosphate and acetaldehyde from 2-deoxy-alpha-D-ribose 1-phosphate: step 1/2. In terms of biological role, isomerase that catalyzes the conversion of deoxy-ribose 1-phosphate (dRib-1-P) and ribose 1-phosphate (Rib-1-P) to deoxy-ribose 5-phosphate (dRib-5-P) and ribose 5-phosphate (Rib-5-P), respectively. The chain is Phosphopentomutase from Aliivibrio fischeri (strain MJ11) (Vibrio fischeri).